A 524-amino-acid chain; its full sequence is GMP synthase [glutamine-hydrolyzing] (524 aa).

The Glutamine amidotransferase type-1 domain maps to 5–195; that stretch reads KVIVIDFGGQ…VRGVCGCAGT (191 aa). Cys-82 serves as the catalytic Nucleophile. Active-site residues include His-169 and Glu-171. Residues 196-389 form the GMPS ATP-PPase domain; that stretch reads WKMDSFVKNT…LGLPDYLVFR (194 aa). 223 to 229 contacts ATP; the sequence is SGGVDSS.

In terms of assembly, homodimer.

It carries out the reaction XMP + L-glutamine + ATP + H2O = GMP + L-glutamate + AMP + diphosphate + 2 H(+). It participates in purine metabolism; GMP biosynthesis; GMP from XMP (L-Gln route): step 1/1. Functionally, catalyzes the synthesis of GMP from XMP. This Agathobacter rectalis (strain ATCC 33656 / DSM 3377 / JCM 17463 / KCTC 5835 / VPI 0990) (Eubacterium rectale) protein is GMP synthase [glutamine-hydrolyzing].